A 272-amino-acid polypeptide reads, in one-letter code: Imidazole glycerol phosphate synthase subunit HisF (272 aa).

Active-site residues include Asp-11 and Asp-130.

The protein belongs to the HisA/HisF family. As to quaternary structure, heterodimer of HisH and HisF.

The protein localises to the cytoplasm. The catalysed reaction is 5-[(5-phospho-1-deoxy-D-ribulos-1-ylimino)methylamino]-1-(5-phospho-beta-D-ribosyl)imidazole-4-carboxamide + L-glutamine = D-erythro-1-(imidazol-4-yl)glycerol 3-phosphate + 5-amino-1-(5-phospho-beta-D-ribosyl)imidazole-4-carboxamide + L-glutamate + H(+). It functions in the pathway amino-acid biosynthesis; L-histidine biosynthesis; L-histidine from 5-phospho-alpha-D-ribose 1-diphosphate: step 5/9. IGPS catalyzes the conversion of PRFAR and glutamine to IGP, AICAR and glutamate. The HisF subunit catalyzes the cyclization activity that produces IGP and AICAR from PRFAR using the ammonia provided by the HisH subunit. In Methanococcus vannielii (strain ATCC 35089 / DSM 1224 / JCM 13029 / OCM 148 / SB), this protein is Imidazole glycerol phosphate synthase subunit HisF.